We begin with the raw amino-acid sequence, 402 residues long: MEYQSGKRVLSLSLGLIGLFSASAWASDSRTVSEPKTPSSCTTLKADSSTATSTIQKALNNCDQGKAVRLSAGSTSVFLSGPLSLPSGVSLLIDKGVTLRAVNNAKSFENAPSSCGVVDKNGKGCDAFITAVSTTNSGIYGPGTIDGQGGVKLQDKKVSWWELAADAKVKKLKQNTPRLIQINKSKNFTLYNVSLINSPNFHVVFSDGDGFTAWKTTIKTPSTARNTDGIDPMSSKNITIAYSNIATGDDNVAIKAYKGRAETRNISILHNDFGTGHGMSIGSETMGVYNVTVDDLKMNGTTNGLRIKSDKSAAGVVNGVRYSNVVMKNVAKPIVIDTVYEKKEGSNVPDWSDITFKDVTSETKGVVVLNGENAKKPIEVTMKNVKLTSDSTWQIKNVNVKK.

The signal sequence occupies residues 1-23 (MEYQSGKRVLSLSLGLIGLFSAS). 2 disulfide bridges follow: C41-C62 and C115-C125. The active-site Proton donor is the D249. Residue H277 is part of the active site.

This sequence belongs to the glycosyl hydrolase 28 family. Monomer.

It is found in the secreted. It carries out the reaction (1,4-alpha-D-galacturonosyl)n+m + H2O = (1,4-alpha-D-galacturonosyl)n + (1,4-alpha-D-galacturonosyl)m.. Functionally, involved in maceration and soft-rotting of plant tissue. This chain is Endo-polygalacturonase (pehA), found in Pectobacterium parmentieri.